A 4351-amino-acid polypeptide reads, in one-letter code: Protocadherin Fat 2 (4351 aa).

Positions 1 to 18 (MTLVLLGLAILLLHRAAC) are cleaved as a signal peptide. At 19 to 4050 (EKSLEETIPP…IKRGDWGQQE (4032 aa)) the chain is on the extracellular side. Cadherin domains follow at residues 34–148 (THSL…KPLF) and 149–256 (SPPS…PPAI). Asn-39, Asn-210, Asn-280, and Asn-330 each carry an N-linked (GlcNAc...) asparagine glycan. Cadherin domains lie at 363–458 (EKAV…APVF), 459–564 (NRSS…QPMF), 565–669 (EEVN…VPVQ), 716–820 (DHFP…PPRF), 821–925 (PPGG…PPQC), 926–1032 (ITEH…SPHF), 1033–1142 (SSFV…RPVF), 1138–1242 (SRPV…PPMF), 1243–1346 (SHKL…SSIP), 1350–1448 (DESY…RPQF), 1449–1555 (LQDH…SPHF), 1556–1660 (TQLR…APVF), 1661–1758 (SKDE…PPAF), 1759–1872 (GKPT…PPRF), 1873–1968 (SEQI…SLQF), 1969–2070 (DQDV…IPEF), 2071–2171 (QHLP…NPLF), 2172–2272 (QSPY…PPTF), 2273–2379 (SQLV…PPKF), 2380–2481 (REPQ…SPEF), 2482–2585 (QQNV…APQF), 2586–2692 (KASG…LPKF), 2693–2799 (SEPL…RPVF), 2800–2908 (EADP…PPRF), 2909–3013 (ASED…SPQC), 3014–3115 (SQLL…APRF), 3116–3220 (FPSH…LPIF), 3221–3323 (LNAE…HPRF), 3324–3428 (THDL…PPRF), 3429–3533 (FQLN…PPST), and 3534–3631 (LPLE…VPQQ). N-linked (GlcNAc...) asparagine glycosylation is found at Asn-459, Asn-568, Asn-627, and Asn-789. N-linked (GlcNAc...) asparagine glycosylation occurs at Asn-996. Asn-1175, Asn-1276, and Asn-1417 each carry an N-linked (GlcNAc...) asparagine glycan. N-linked (GlcNAc...) asparagine glycans are attached at residues Asn-1899, Asn-1998, Asn-2007, Asn-2102, Asn-2165, Asn-2183, Asn-2325, Asn-2368, Asn-2387, Asn-2430, Asn-2470, Asn-2547, and Asn-2597. Residues Asn-3127, Asn-3278, and Asn-3312 are each glycosylated (N-linked (GlcNAc...) asparagine). Residues Asn-3432, Asn-3603, Asn-3770, Asn-3774, Asn-3815, Asn-3842, Asn-3875, and Asn-3906 are each glycosylated (N-linked (GlcNAc...) asparagine). The region spanning 3775-3946 (GTTLRFSGQS…RLETWALSQC (172 aa)) is the Laminin G-like domain. Intrachain disulfides connect Cys-3914–Cys-3946, Cys-3953–Cys-3964, Cys-3958–Cys-3974, and Cys-3976–Cys-3985. 2 consecutive EGF-like domains span residues 3949-3986 (PGTA…RNCE) and 3988-4024 (GREN…DRCE). An N-linked (GlcNAc...) asparagine glycan is attached at Asn-3991. Intrachain disulfides connect Cys-3992/Cys-4003, Cys-3997/Cys-4012, and Cys-4014/Cys-4023. A helical transmembrane segment spans residues 4051 to 4071 (FLVITVALPLVIIATVGLLLY). Over 4072–4351 (CRRRKSHKPV…DYGSCEEVMF (280 aa)) the chain is Cytoplasmic. Residues 4316 to 4340 (VNGGPATGRSQPRAPPNYEGSDMVE) are disordered.

In terms of assembly, homodimer. In terms of tissue distribution, cerebellum-specific expression. Expressed in thin parallel fibers of cerebellar granule cells.

The protein resides in the cell membrane. It localises to the cell junction. It is found in the golgi apparatus. Its subcellular location is the trans-Golgi network. Functionally, involved in the regulation of cell migration. May be involved in mediating the organization of the parallel fibers of granule cells during cerebellar development. The polypeptide is Protocadherin Fat 2 (Fat2) (Rattus norvegicus (Rat)).